A 450-amino-acid polypeptide reads, in one-letter code: Probable ECA polymerase (450 aa).

The next 11 membrane-spanning stretches (helical) occupy residues 6–26, 37–57, 63–83, 118–138, 155–175, 181–201, 207–227, 228–248, 341–361, 378–398, and 410–430; these read FSGLFVVWLLCTLFIATLTWF, VFFSLLFLLTFFFGFPLTSVL, VGVAPPEILLQALLSAGCFYA, VILMGIALVSVGIFFMHNGFL, GVALKRFFYFFIPAMLVVYFL, AWLFFLVSTVAFGLLTYMIVG, IIIAFAIFLFIGIIRGWISLW, MLAAAGVLGIVGMFWLALKRY, LVVMGGALFIPLGAIVVGLII, YKAAILHSFCFGAIFNMIVLA, and VFFIVVFGACLMIAKLLYWLF.

This sequence belongs to the WzyE family. Probably part of a complex composed of WzxE, WzyE and WzzE.

The protein resides in the cell inner membrane. Its pathway is bacterial outer membrane biogenesis; enterobacterial common antigen biosynthesis. Its function is as follows. Probably involved in the polymerization of enterobacterial common antigen (ECA) trisaccharide repeat units. The polypeptide is Probable ECA polymerase (Escherichia coli O139:H28 (strain E24377A / ETEC)).